The sequence spans 401 residues: MQTLAGKKILLGISGGIAAYKCADLTRRLKERGAEVQVVMTKAAKEFITPLTMQAVSGRPVSDSLLDPAAEASMGHIELAKWADLILLAPATADLIARMAAGMGNDLLTTLVLATDAPVAVSPAMNQQMYRNVATQENIATLSRRGMEIWGPAAGEQACGDVGPGRMLEPMQLVALCEQFFQPKPLQDKSILITAGPTREAIDPVRYITNHSSGKMGYALAQAAMQLGANVTLVSGPVSLPTPVNVNRINVDSAQEMYDAVMAQASDHDIFISCAAVADYRPATIAEQKLKKTDDSDEMTITMVKNPDIVASVSAMTENRPFTVGFAAETNDVEVYARRKLEKKKLDLLCANDVSVEGQGFNSSDNAITLYWSQGEKALPLNSKAVLSMEILKQIQTLMGH.

The segment at 1 to 190 is phosphopantothenoylcysteine decarboxylase; it reads MQTLAGKKIL…FQPKPLQDKS (190 aa). Residue Cys-159 is the Proton donor of the active site. A phosphopantothenate--cysteine ligase region spans residues 191 to 401; that stretch reads ILITAGPTRE…LKQIQTLMGH (211 aa). CTP contacts are provided by residues Asp-279, Lys-289, 307–310, Phe-326, Lys-340, and Lys-344; that span reads PDIV.

It in the N-terminal section; belongs to the HFCD (homo-oligomeric flavin containing Cys decarboxylase) superfamily. The protein in the C-terminal section; belongs to the PPC synthetase family. It depends on Mg(2+) as a cofactor. Requires FMN as cofactor.

The enzyme catalyses N-[(R)-4-phosphopantothenoyl]-L-cysteine + H(+) = (R)-4'-phosphopantetheine + CO2. The catalysed reaction is (R)-4'-phosphopantothenate + L-cysteine + CTP = N-[(R)-4-phosphopantothenoyl]-L-cysteine + CMP + diphosphate + H(+). Its pathway is cofactor biosynthesis; coenzyme A biosynthesis; CoA from (R)-pantothenate: step 2/5. It functions in the pathway cofactor biosynthesis; coenzyme A biosynthesis; CoA from (R)-pantothenate: step 3/5. Its function is as follows. Catalyzes two sequential steps in the biosynthesis of coenzyme A. In the first step cysteine is conjugated to 4'-phosphopantothenate to form 4-phosphopantothenoylcysteine. In the second step the latter compound is decarboxylated to form 4'-phosphopantotheine. The chain is Coenzyme A biosynthesis bifunctional protein CoaBC from Vibrio vulnificus (strain CMCP6).